Reading from the N-terminus, the 580-residue chain is Probable inositol transporter 3 (580 aa).

The next 12 helical transmembrane spans lie at Gly-34 to Ile-54, Glu-69 to Tyr-89, Val-104 to Leu-124, Leu-127 to Met-147, Gly-161 to Thr-181, Trp-187 to Pro-207, Phe-289 to Ala-309, Ala-316 to Val-336, Leu-344 to Asn-364, Phe-455 to Gly-475, Leu-493 to Phe-513, and Gly-524 to Val-544.

The protein belongs to the major facilitator superfamily. Sugar transporter (TC 2.A.1.1) family.

Its subcellular location is the membrane. In terms of biological role, plasma membrane inositol-proton symporter. This chain is Probable inositol transporter 3 (INT3), found in Arabidopsis thaliana (Mouse-ear cress).